A 224-amino-acid polypeptide reads, in one-letter code: Ethylene-inducing xylanase 5 (224 aa).

The first 16 residues, 1–16 (MLKSLVVLLLTSRVIA), serve as a signal peptide directing secretion. In terms of domain architecture, GH11 spans 32-218 (QATPNSQGTH…SSGFAEMTVA (187 aa)). A glycan (N-linked (GlcNAc...) asparagine) is linked at Asn-88. Catalysis depends on Glu-117, which acts as the Nucleophile. The active-site Proton donor is Glu-205.

It belongs to the glycosyl hydrolase 11 (cellulase G) family.

It carries out the reaction Endohydrolysis of (1-&gt;4)-beta-D-xylosidic linkages in xylans.. It participates in glycan degradation; xylan degradation. Its function is as follows. Endo-1,4-beta-xylanase involved in the hydrolysis of xylan, a major structural heterogeneous polysaccharide found in plant biomass representing the second most abundant polysaccharide in the biosphere, after cellulose. May act as an elicitor of plant defense responses in certain plants but does not exhibit any cell death when transiently expressed in N.benthamiana. This Verticillium dahliae (strain VdLs.17 / ATCC MYA-4575 / FGSC 10137) (Verticillium wilt) protein is Ethylene-inducing xylanase 5.